Reading from the N-terminus, the 921-residue chain is Protein translocase subunit SecA (921 aa).

ATP contacts are provided by residues Gln87, Gly105 to Thr109, and Asp516. The Zn(2+) site is built by Cys905, Cys907, Cys916, and His917.

This sequence belongs to the SecA family. As to quaternary structure, monomer and homodimer. Part of the essential Sec protein translocation apparatus which comprises SecA, SecYEG and auxiliary proteins SecDF-YajC and YidC. It depends on Zn(2+) as a cofactor.

The protein resides in the cell inner membrane. The protein localises to the cytoplasm. It carries out the reaction ATP + H2O + cellular proteinSide 1 = ADP + phosphate + cellular proteinSide 2.. Part of the Sec protein translocase complex. Interacts with the SecYEG preprotein conducting channel. Has a central role in coupling the hydrolysis of ATP to the transfer of proteins into and across the cell membrane, serving both as a receptor for the preprotein-SecB complex and as an ATP-driven molecular motor driving the stepwise translocation of polypeptide chains across the membrane. This Albidiferax ferrireducens (strain ATCC BAA-621 / DSM 15236 / T118) (Rhodoferax ferrireducens) protein is Protein translocase subunit SecA.